Consider the following 559-residue polypeptide: Dihydroxy-acid dehydratase (559 aa).

D78 is a Mg(2+) binding site. A [2Fe-2S] cluster-binding site is contributed by C119. Residues D120 and K121 each coordinate Mg(2+). K121 carries the post-translational modification N6-carboxylysine. C191 serves as a coordination point for [2Fe-2S] cluster. E442 is a binding site for Mg(2+). S468 functions as the Proton acceptor in the catalytic mechanism.

This sequence belongs to the IlvD/Edd family. As to quaternary structure, homodimer. The cofactor is [2Fe-2S] cluster. It depends on Mg(2+) as a cofactor.

It carries out the reaction (2R)-2,3-dihydroxy-3-methylbutanoate = 3-methyl-2-oxobutanoate + H2O. It catalyses the reaction (2R,3R)-2,3-dihydroxy-3-methylpentanoate = (S)-3-methyl-2-oxopentanoate + H2O. It participates in amino-acid biosynthesis; L-isoleucine biosynthesis; L-isoleucine from 2-oxobutanoate: step 3/4. The protein operates within amino-acid biosynthesis; L-valine biosynthesis; L-valine from pyruvate: step 3/4. Functions in the biosynthesis of branched-chain amino acids. Catalyzes the dehydration of (2R,3R)-2,3-dihydroxy-3-methylpentanoate (2,3-dihydroxy-3-methylvalerate) into 2-oxo-3-methylpentanoate (2-oxo-3-methylvalerate) and of (2R)-2,3-dihydroxy-3-methylbutanoate (2,3-dihydroxyisovalerate) into 2-oxo-3-methylbutanoate (2-oxoisovalerate), the penultimate precursor to L-isoleucine and L-valine, respectively. The polypeptide is Dihydroxy-acid dehydratase (Agathobacter rectalis (strain ATCC 33656 / DSM 3377 / JCM 17463 / KCTC 5835 / VPI 0990) (Eubacterium rectale)).